The sequence spans 156 residues: Small ribosomal subunit protein uS7 (156 aa).

The protein belongs to the universal ribosomal protein uS7 family. In terms of assembly, part of the 30S ribosomal subunit. Contacts proteins S9 and S11.

One of the primary rRNA binding proteins, it binds directly to 16S rRNA where it nucleates assembly of the head domain of the 30S subunit. Is located at the subunit interface close to the decoding center, probably blocks exit of the E-site tRNA. The polypeptide is Small ribosomal subunit protein uS7 (Baumannia cicadellinicola subsp. Homalodisca coagulata).